Reading from the N-terminus, the 547-residue chain is Phosphomethylpyrimidine synthase (547 aa).

Residues Asn-150, Met-179, Tyr-208, His-244, 264–266 (SRG), 305–308 (DGLR), and Glu-344 each bind substrate. Residue His-348 participates in Zn(2+) binding. Position 371 (Tyr-371) interacts with substrate. His-412 serves as a coordination point for Zn(2+). [4Fe-4S] cluster-binding residues include Cys-492, Cys-495, and Cys-500.

It belongs to the ThiC family. [4Fe-4S] cluster serves as cofactor.

The enzyme catalyses 5-amino-1-(5-phospho-beta-D-ribosyl)imidazole + S-adenosyl-L-methionine = 4-amino-2-methyl-5-(phosphooxymethyl)pyrimidine + CO + 5'-deoxyadenosine + formate + L-methionine + 3 H(+). It participates in cofactor biosynthesis; thiamine diphosphate biosynthesis. Functionally, catalyzes the synthesis of the hydroxymethylpyrimidine phosphate (HMP-P) moiety of thiamine from aminoimidazole ribotide (AIR) in a radical S-adenosyl-L-methionine (SAM)-dependent reaction. The chain is Phosphomethylpyrimidine synthase from Nocardia farcinica (strain IFM 10152).